The following is a 387-amino-acid chain: 3-ketoacyl-CoA thiolase (387 aa).

Residue Cys-91 is the Acyl-thioester intermediate of the active site. Active-site proton acceptor residues include His-343 and Cys-373.

It belongs to the thiolase-like superfamily. Thiolase family. Heterotetramer of two alpha chains (FadB) and two beta chains (FadA).

Its subcellular location is the cytoplasm. It carries out the reaction an acyl-CoA + acetyl-CoA = a 3-oxoacyl-CoA + CoA. The protein operates within lipid metabolism; fatty acid beta-oxidation. Functionally, catalyzes the final step of fatty acid oxidation in which acetyl-CoA is released and the CoA ester of a fatty acid two carbons shorter is formed. The chain is 3-ketoacyl-CoA thiolase from Enterobacter sp. (strain 638).